Consider the following 245-residue polypeptide: 4-hydroxy-tetrahydrodipicolinate reductase (245 aa).

NAD(+) contacts are provided by residues 8–13 (GSTGKM), 78–80 (GTT), and 102–105 (SANM). The active-site Proton donor/acceptor is the H134. H135 provides a ligand contact to (S)-2,3,4,5-tetrahydrodipicolinate. Catalysis depends on K138, which acts as the Proton donor. Position 144 to 145 (144 to 145 (GT)) interacts with (S)-2,3,4,5-tetrahydrodipicolinate.

It belongs to the DapB family.

Its subcellular location is the cytoplasm. It catalyses the reaction (S)-2,3,4,5-tetrahydrodipicolinate + NAD(+) + H2O = (2S,4S)-4-hydroxy-2,3,4,5-tetrahydrodipicolinate + NADH + H(+). The enzyme catalyses (S)-2,3,4,5-tetrahydrodipicolinate + NADP(+) + H2O = (2S,4S)-4-hydroxy-2,3,4,5-tetrahydrodipicolinate + NADPH + H(+). The protein operates within amino-acid biosynthesis; L-lysine biosynthesis via DAP pathway; (S)-tetrahydrodipicolinate from L-aspartate: step 4/4. In terms of biological role, catalyzes the conversion of 4-hydroxy-tetrahydrodipicolinate (HTPA) to tetrahydrodipicolinate. The polypeptide is 4-hydroxy-tetrahydrodipicolinate reductase (Rickettsia akari (strain Hartford)).